Here is a 176-residue protein sequence, read N- to C-terminus: PRELI domain-containing protein 2 (176 aa).

Residues 1 to 175 enclose the PRELI/MSF1 domain; the sequence is MGIAVEARKV…ILRERCGCPF (175 aa).

The sequence is that of PRELI domain-containing protein 2 (prelid2) from Xenopus tropicalis (Western clawed frog).